The sequence spans 238 residues: DNA repair protein RAD59 (238 aa).

It belongs to the RAD52 family. Interacts with RAD51 and RAD52.

It localises to the nucleus. Functionally, involved in the repair of double-strand breaks in DNA during vegetative growth via recombination and single-strand annealing. Anneals complementary single-stranded DNA. The chain is DNA repair protein RAD59 (RAD59) from Saccharomyces cerevisiae (strain ATCC 204508 / S288c) (Baker's yeast).